The following is a 529-amino-acid chain: Peptide chain release factor 3 (529 aa).

One can recognise a tr-type G domain in the interval 11 to 280 (SKRRTFAIIS…SLIKWAPSPI (270 aa)). GTP contacts are provided by residues 20-27 (SHPDAGKT), 88-92 (DTPGH), and 142-145 (NKLD).

The protein belongs to the TRAFAC class translation factor GTPase superfamily. Classic translation factor GTPase family. PrfC subfamily.

The protein localises to the cytoplasm. Its function is as follows. Increases the formation of ribosomal termination complexes and stimulates activities of RF-1 and RF-2. It binds guanine nucleotides and has strong preference for UGA stop codons. It may interact directly with the ribosome. The stimulation of RF-1 and RF-2 is significantly reduced by GTP and GDP, but not by GMP. This is Peptide chain release factor 3 from Buchnera aphidicola subsp. Schizaphis graminum (strain Sg).